Reading from the N-terminus, the 281-residue chain is ATP phosphoribosyltransferase (281 aa).

It belongs to the ATP phosphoribosyltransferase family. Long subfamily. Requires Mg(2+) as cofactor.

The protein resides in the cytoplasm. The catalysed reaction is 1-(5-phospho-beta-D-ribosyl)-ATP + diphosphate = 5-phospho-alpha-D-ribose 1-diphosphate + ATP. The protein operates within amino-acid biosynthesis; L-histidine biosynthesis; L-histidine from 5-phospho-alpha-D-ribose 1-diphosphate: step 1/9. Feedback inhibited by histidine. Catalyzes the condensation of ATP and 5-phosphoribose 1-diphosphate to form N'-(5'-phosphoribosyl)-ATP (PR-ATP). Has a crucial role in the pathway because the rate of histidine biosynthesis seems to be controlled primarily by regulation of HisG enzymatic activity. The sequence is that of ATP phosphoribosyltransferase from Kocuria rhizophila (strain ATCC 9341 / DSM 348 / NBRC 103217 / DC2201).